A 430-amino-acid polypeptide reads, in one-letter code: RNA polymerase-associated protein LEO1 (430 aa).

The segment covering M1 to A10 has biased composition (polar residues). Residues M1–G128 are disordered. The segment covering K18–D30 has biased composition (low complexity). A compositionally biased stretch (basic and acidic residues) spans R99 to S119. Coiled-coil stretches lie at residues T326–M347 and E409–S429. The interval R349–D430 is disordered.

The protein belongs to the LEO1 family. In terms of assembly, component of the PAF1 complex which consists of at least cdc-73, ctr-9, leo-1, pafo-1 and rtfo-1.

Its subcellular location is the nucleus. It localises to the cytoplasm. Component of the PAF1 complex which is a multifunctional complex involved in transcription initiation via genetic interactions with TATA-binding proteins, elongation and transcription-coupled histone modification. The chain is RNA polymerase-associated protein LEO1 from Caenorhabditis elegans.